We begin with the raw amino-acid sequence, 455 residues long: Pentatricopeptide repeat-containing protein At3g26630, chloroplastic (455 aa).

A chloroplast-targeting transit peptide spans Met-1–Arg-19. 11 PPR repeats span residues Asp-51 to Pro-81, Ser-82 to Phe-117, Asp-118 to Asn-152, Asp-153 to Ser-187, Trp-188 to Arg-214, Asn-215 to Pro-249, Asn-250 to Leu-284, Asp-285 to Lys-315, Ser-316 to Glu-350, Asp-352 to Pro-387, and Ile-388 to Asp-418.

Belongs to the PPR family. PCMP-A subfamily.

The protein resides in the plastid. It is found in the chloroplast. The polypeptide is Pentatricopeptide repeat-containing protein At3g26630, chloroplastic (PCMP-A6) (Arabidopsis thaliana (Mouse-ear cress)).